The primary structure comprises 468 residues: Argininosuccinate lyase (468 aa).

Belongs to the lyase 1 family. Argininosuccinate lyase subfamily.

The protein resides in the cytoplasm. It catalyses the reaction 2-(N(omega)-L-arginino)succinate = fumarate + L-arginine. It participates in amino-acid biosynthesis; L-arginine biosynthesis; L-arginine from L-ornithine and carbamoyl phosphate: step 3/3. The protein is Argininosuccinate lyase of Hahella chejuensis (strain KCTC 2396).